Consider the following 258-residue polypeptide: Imidazole glycerol phosphate synthase subunit HisF (258 aa).

Catalysis depends on residues aspartate 11 and aspartate 130.

It belongs to the HisA/HisF family. As to quaternary structure, heterodimer of HisH and HisF.

Its subcellular location is the cytoplasm. It carries out the reaction 5-[(5-phospho-1-deoxy-D-ribulos-1-ylimino)methylamino]-1-(5-phospho-beta-D-ribosyl)imidazole-4-carboxamide + L-glutamine = D-erythro-1-(imidazol-4-yl)glycerol 3-phosphate + 5-amino-1-(5-phospho-beta-D-ribosyl)imidazole-4-carboxamide + L-glutamate + H(+). The protein operates within amino-acid biosynthesis; L-histidine biosynthesis; L-histidine from 5-phospho-alpha-D-ribose 1-diphosphate: step 5/9. Functionally, IGPS catalyzes the conversion of PRFAR and glutamine to IGP, AICAR and glutamate. The HisF subunit catalyzes the cyclization activity that produces IGP and AICAR from PRFAR using the ammonia provided by the HisH subunit. This is Imidazole glycerol phosphate synthase subunit HisF from Yersinia enterocolitica serotype O:8 / biotype 1B (strain NCTC 13174 / 8081).